The primary structure comprises 258 residues: Allene oxide cyclase 3, chloroplastic (258 aa).

A chloroplast-targeting transit peptide spans methionine 1–arginine 56.

Belongs to the allene oxide cyclase family. In terms of tissue distribution, highly expressed in fully developed leaves.

The protein localises to the plastid. It is found in the chloroplast. The enzyme catalyses (9Z,13S,15Z)-12,13-epoxyoctadeca-9,11,15-trienoate = (9S,13S,15Z)-12-oxophyto-10,15-dienoate. Functionally, involved in the production of 12-oxo-phytodienoic acid (OPDA), a precursor of jasmonic acid. This Arabidopsis thaliana (Mouse-ear cress) protein is Allene oxide cyclase 3, chloroplastic (AOC3).